The following is a 107-amino-acid chain: uncharacterized protein (107 aa).

The interval 23-64 is disordered; that stretch reads SASSSSSTRIPSGFASATSSKSNSSTKSSPSPINSFNNKTNN. Residues 37–57 show a composition bias toward low complexity; sequence ASATSSKSNSSTKSSPSPINS. The chain crosses the membrane as a helical span at residues 76–98; it reads LAFGIVEFMVFNGMISTITTTTF.

The protein resides in the membrane. This is an uncharacterized protein from Dictyostelium discoideum (Social amoeba).